A 178-amino-acid chain; its full sequence is Translation initiation factor IF-3 (178 aa).

Belongs to the IF-3 family. As to quaternary structure, monomer.

The protein resides in the cytoplasm. Functionally, IF-3 binds to the 30S ribosomal subunit and shifts the equilibrium between 70S ribosomes and their 50S and 30S subunits in favor of the free subunits, thus enhancing the availability of 30S subunits on which protein synthesis initiation begins. In Ralstonia nicotianae (strain ATCC BAA-1114 / GMI1000) (Ralstonia solanacearum), this protein is Translation initiation factor IF-3.